Consider the following 188-residue polypeptide: Methylated-DNA--protein-cysteine methyltransferase (188 aa).

DNA contacts are provided by tyrosine 120, glycine 121, and arginine 134. Cysteine 151 (nucleophile; methyl group acceptor) is an active-site residue. Serine 157 is a binding site for DNA.

This sequence belongs to the MGMT family.

The protein resides in the nucleus. It catalyses the reaction a 6-O-methyl-2'-deoxyguanosine in DNA + L-cysteinyl-[protein] = S-methyl-L-cysteinyl-[protein] + a 2'-deoxyguanosine in DNA. It carries out the reaction a 4-O-methyl-thymidine in DNA + L-cysteinyl-[protein] = a thymidine in DNA + S-methyl-L-cysteinyl-[protein]. Functionally, involved in the cellular defense against the biological effects of O6-methylguanine (O6-MeG) and O4-methylthymine (O4-MeT) in DNA. Repairs the methylated nucleobase in DNA by stoichiometrically transferring the methyl group to a cysteine residue in the enzyme. This is a suicide reaction: the enzyme is irreversibly inactivated. Prefers double-stranded DNA over single-stranded DNA as substrate. The chain is Methylated-DNA--protein-cysteine methyltransferase (MGT1) from Saccharomyces cerevisiae (strain ATCC 204508 / S288c) (Baker's yeast).